Consider the following 271-residue polypeptide: Formamidopyrimidine-DNA glycosylase (271 aa).

The active-site Schiff-base intermediate with DNA is the Pro-2. Glu-3 serves as the catalytic Proton donor. Lys-56 acts as the Proton donor; for beta-elimination activity in catalysis. 3 residues coordinate DNA: His-89, Arg-107, and Arg-151. The FPG-type zinc finger occupies 236–270 (MVYARQGQPCRVCATPIKSLRQGQRSTFYCPHCQK). The active-site Proton donor; for delta-elimination activity is the Arg-260.

The protein belongs to the FPG family. Monomer. The cofactor is Zn(2+).

The catalysed reaction is Hydrolysis of DNA containing ring-opened 7-methylguanine residues, releasing 2,6-diamino-4-hydroxy-5-(N-methyl)formamidopyrimidine.. It carries out the reaction 2'-deoxyribonucleotide-(2'-deoxyribose 5'-phosphate)-2'-deoxyribonucleotide-DNA = a 3'-end 2'-deoxyribonucleotide-(2,3-dehydro-2,3-deoxyribose 5'-phosphate)-DNA + a 5'-end 5'-phospho-2'-deoxyribonucleoside-DNA + H(+). In terms of biological role, involved in base excision repair of DNA damaged by oxidation or by mutagenic agents. Acts as a DNA glycosylase that recognizes and removes damaged bases. Has a preference for oxidized purines, such as 7,8-dihydro-8-oxoguanine (8-oxoG). Has AP (apurinic/apyrimidinic) lyase activity and introduces nicks in the DNA strand. Cleaves the DNA backbone by beta-delta elimination to generate a single-strand break at the site of the removed base with both 3'- and 5'-phosphates. The polypeptide is Formamidopyrimidine-DNA glycosylase (Albidiferax ferrireducens (strain ATCC BAA-621 / DSM 15236 / T118) (Rhodoferax ferrireducens)).